A 573-amino-acid polypeptide reads, in one-letter code: Urease subunit alpha (573 aa).

Residues H139, H141, and K222 each coordinate Ni(2+). K222 is modified (N6-carboxylysine). A substrate-binding site is contributed by H224. The Ni(2+) site is built by H251 and H277. H325 serves as the catalytic Proton donor. D365 is a Ni(2+) binding site.

The protein belongs to the metallo-dependent hydrolases superfamily. Urease alpha subunit family. Heterotrimer of UreA (gamma), UreB (beta) and UreC (alpha) subunits. Three heterotrimers associate to form the active enzyme. Ni cation serves as cofactor. In terms of processing, carboxylation allows a single lysine to coordinate two nickel ions.

It localises to the cytoplasm. The enzyme catalyses urea + 2 H2O + H(+) = hydrogencarbonate + 2 NH4(+). The protein operates within nitrogen metabolism; urea degradation; CO(2) and NH(3) from urea (urease route): step 1/1. The sequence is that of Urease subunit alpha from Flavobacterium johnsoniae (strain ATCC 17061 / DSM 2064 / JCM 8514 / BCRC 14874 / CCUG 350202 / NBRC 14942 / NCIMB 11054 / UW101) (Cytophaga johnsonae).